Here is a 315-residue protein sequence, read N- to C-terminus: tRNA uridine(34) hydroxylase (315 aa).

The Rhodanese domain occupies 136 to 230; the sequence is SDPETLVIDT…YLEEIPPEES (95 aa). Cys190 serves as the catalytic Cysteine persulfide intermediate.

Belongs to the TrhO family.

It catalyses the reaction uridine(34) in tRNA + AH2 + O2 = 5-hydroxyuridine(34) in tRNA + A + H2O. Catalyzes oxygen-dependent 5-hydroxyuridine (ho5U) modification at position 34 in tRNAs. The chain is tRNA uridine(34) hydroxylase from Sinorhizobium medicae (strain WSM419) (Ensifer medicae).